A 426-amino-acid chain; its full sequence is Enolase (426 aa).

(2R)-2-phosphoglycerate is bound at residue Gln163. The Proton donor role is filled by Glu205. Positions 242, 283, and 310 each coordinate Mg(2+). (2R)-2-phosphoglycerate contacts are provided by Lys335, Arg364, Ser365, and Lys386. Catalysis depends on Lys335, which acts as the Proton acceptor.

Belongs to the enolase family. It depends on Mg(2+) as a cofactor.

It localises to the cytoplasm. It is found in the secreted. The protein resides in the cell surface. It catalyses the reaction (2R)-2-phosphoglycerate = phosphoenolpyruvate + H2O. It participates in carbohydrate degradation; glycolysis; pyruvate from D-glyceraldehyde 3-phosphate: step 4/5. Functionally, catalyzes the reversible conversion of 2-phosphoglycerate (2-PG) into phosphoenolpyruvate (PEP). It is essential for the degradation of carbohydrates via glycolysis. In Arthrobacter sp. (strain FB24), this protein is Enolase.